Here is a 123-residue protein sequence, read N- to C-terminus: uncharacterized protein (123 aa).

2 helical membrane-spanning segments follow: residues 53–73 and 75–95; these read VWFL…FFFL and VLWF…VFSH.

It is found in the membrane. This is an uncharacterized protein from Saccharomyces cerevisiae (strain ATCC 204508 / S288c) (Baker's yeast).